A 280-amino-acid polypeptide reads, in one-letter code: Apoptosis regulator ced-9 (280 aa).

Residues 33-59 are disordered; that stretch reads GTEPTDFGINSDAQDLPSPSRQASTRR. Over residues 43 to 59 the composition is skewed to polar residues; it reads SDAQDLPSPSRQASTRR. The BH4 signature appears at 80 to 99; sequence IEGFVVDYFTHRIRQNGMEW. The BH1 signature appears at 160–179; it reads QTDQCPMSYGRLIGLISFGG. A BH2 motif is present at residues 213-229; sequence NWKEHNRSWDDFMTLGK.

This sequence belongs to the Bcl-2 family. Interacts with asymmetric homodimer ced-4; the interaction sequesters ced-4. Interacts with egl-1; the interaction results in ced-4 release. Interacts with dre-1; the interaction inhibits ced-9 activity, either directly or indirectly. Interacts with dct-1. May form a complex composed of ced-9, ced-4 and mac-1. Interacts with dynamin-related protein drp-1 (via residues 280-502); the interaction is enhanced by GTP rather than GDP; the interaction is probably direct and may occur at the mitochondrion. Interaction with drp-1 may be enhanced by interaction of ced-9 with egl-1, but not with ced-4. A ced-9/egl-1 complex may recruit drp-1 to the mitochondrial surface. Interacts with fzo-1; interaction may be suppressed by interaction of ced-9 with egl-1.

It is found in the perikaryon. It localises to the synapse. The protein resides in the endomembrane system. Its subcellular location is the mitochondrion membrane. The protein localises to the cytoplasm. Its function is as follows. Plays a major role in programmed cell death (PCD, apoptosis). egl-1 binds to and directly inhibits the activity of ced-9, releasing the cell death activator ced-4 from a ced-9/ced-4 containing protein complex and allowing ced-4 to activate the cell-killing caspase ced-3. During larval development, required for the elimination of transient presynaptic components downstream of egl-1 and upstream of ced-4 and ced-3 apoptotic pathway. Has been shown in one study to be dispensable in mitochondrial dynamics and morphology during early embryonic development. However, another study shows that a egl-1/ced-9 containing complex may promote drp-1-dependent mitochondrial fission. This chain is Apoptosis regulator ced-9 (ced-9), found in Caenorhabditis elegans.